A 461-amino-acid polypeptide reads, in one-letter code: MSATPPIVPTATPKVGFVSLGCPKALVDSEQIITQLRAEGYEISGTYDGADLVVVNTCGFIDEAVQESLDAIGEALNENGKVIVTGCLGAKKSASGSGLIEEVHPKVLAVTGPHALGEVMQHVHTHLPKPHDPFVDLVPAAGVKLTPRHYAYLKISEGCNHRCTFCIIPSMRGDLVSRPVADVMLEAENLFKSGVKELLVISQDTSAYGVDVKYRTGFWNGKPIKTRMTDLVGALGELAAQYGAWVRLHYVYPYPSVDEVIPMMAEGPYKGHVLPYLDVPFQHAHPEVLKRMKRPANAEKVMERVKKWREMCPDLTIRSTFIAGFPGETEEQFQTLLDFIREAELDRVGCFAYSPVEGATANELDGALPDEVREERRARFMEVAEEVSAKRIAKKVGKTLKVLVDEINADGGIGRTAADAPEIDGVVYIAPAAKASKRYKVGDFVSVKITGADGHDLWGEV.

An MTTase N-terminal domain is found at 13–128 (PKVGFVSLGC…VMQHVHTHLP (116 aa)). Residues Cys-22, Cys-58, Cys-87, Cys-159, Cys-163, and Cys-166 each contribute to the [4Fe-4S] cluster site. The Radical SAM core domain maps to 145–390 (LTPRHYAYLK…MEVAEEVSAK (246 aa)). A TRAM domain is found at 393 to 461 (AKKVGKTLKV…ADGHDLWGEV (69 aa)).

Belongs to the methylthiotransferase family. RimO subfamily. Requires [4Fe-4S] cluster as cofactor.

It is found in the cytoplasm. It catalyses the reaction L-aspartate(89)-[ribosomal protein uS12]-hydrogen + (sulfur carrier)-SH + AH2 + 2 S-adenosyl-L-methionine = 3-methylsulfanyl-L-aspartate(89)-[ribosomal protein uS12]-hydrogen + (sulfur carrier)-H + 5'-deoxyadenosine + L-methionine + A + S-adenosyl-L-homocysteine + 2 H(+). Catalyzes the methylthiolation of an aspartic acid residue of ribosomal protein uS12. This Paraburkholderia phytofirmans (strain DSM 17436 / LMG 22146 / PsJN) (Burkholderia phytofirmans) protein is Ribosomal protein uS12 methylthiotransferase RimO.